The sequence spans 401 residues: L-rhamnonate dehydratase (401 aa).

The substrate site is built by histidine 29 and arginine 55. Mg(2+) is bound by residues aspartate 222, glutamate 248, and glutamate 276. Histidine 325 serves as the catalytic Proton acceptor. Glutamate 345 contacts substrate.

Belongs to the mandelate racemase/muconate lactonizing enzyme family. RhamD subfamily. In terms of assembly, homooctamer; tetramer of dimers. Mg(2+) is required as a cofactor.

The enzyme catalyses L-rhamnonate = 2-dehydro-3-deoxy-L-rhamnonate + H2O. Functionally, catalyzes the dehydration of L-rhamnonate to 2-keto-3-deoxy-L-rhamnonate (KDR). The polypeptide is L-rhamnonate dehydratase (Salmonella schwarzengrund (strain CVM19633)).